The following is a 447-amino-acid chain: Xylose isomerase (447 aa).

Active-site residues include H102 and D105. Mg(2+) contacts are provided by E233, E269, H272, D297, D308, D310, and D340.

The protein belongs to the xylose isomerase family. In terms of assembly, homotetramer. Mg(2+) is required as a cofactor.

Its subcellular location is the cytoplasm. It catalyses the reaction alpha-D-xylose = alpha-D-xylulofuranose. This Pediococcus pentosaceus (strain ATCC 25745 / CCUG 21536 / LMG 10740 / 183-1w) protein is Xylose isomerase.